The sequence spans 123 residues: uncharacterized protein (123 aa).

This is an uncharacterized protein from Bacillus subtilis (strain 168).